The chain runs to 78 residues: Large ribosomal subunit protein bL28 (78 aa).

The protein belongs to the bacterial ribosomal protein bL28 family.

This chain is Large ribosomal subunit protein bL28, found in Prochlorococcus marinus (strain MIT 9211).